The following is a 533-amino-acid chain: Retinoid isomerohydrolase (533 aa).

Residue Ser2 is modified to N-acetylserine. Cys112 carries the S-palmitoyl cysteine; in membrane form lipid modification. His180 lines the Fe cation pocket. Cys231 carries S-palmitoyl cysteine; in membrane form lipidation. Positions 241 and 313 each coordinate Fe cation. 2 S-palmitoyl cysteine; in membrane form lipidation sites follow: Cys329 and Cys330. Fe cation is bound at residue His527.

This sequence belongs to the carotenoid oxygenase family. Fe(2+) is required as a cofactor. Palmitoylation by LRAT regulates ligand binding specificity; the palmitoylated form (membrane form) specifically binds all-trans-retinyl-palmitate, while the soluble unpalmitoylated form binds all-trans-retinol (vitamin A). As to expression, retinal pigment epithelium specific.

The protein resides in the cell membrane. The enzyme catalyses an all-trans-retinyl ester + H2O = 11-cis-retinol + a fatty acid + H(+). It catalyses the reaction lutein = (3R,3'S)-zeaxanthin. It carries out the reaction all-trans-retinyl hexadecanoate + H2O = 11-cis-retinol + hexadecanoate + H(+). Functionally, critical isomerohydrolase in the retinoid cycle involved in regeneration of 11-cis-retinal, the chromophore of rod and cone opsins. Catalyzes the cleavage and isomerization of all-trans-retinyl fatty acid esters to 11-cis-retinol which is further oxidized by 11-cis retinol dehydrogenase to 11-cis-retinal for use as visual chromophore. Essential for the production of 11-cis retinal for both rod and cone photoreceptors. Also capable of catalyzing the isomerization of lutein to meso-zeaxanthin an eye-specific carotenoid. The soluble form binds vitamin A (all-trans-retinol), making it available for LRAT processing to all-trans-retinyl ester. The membrane form, palmitoylated by LRAT, binds all-trans-retinyl esters, making them available for IMH (isomerohydrolase) processing to all-cis-retinol. The soluble form is regenerated by transferring its palmitoyl groups onto 11-cis-retinol, a reaction catalyzed by LRAT. This chain is Retinoid isomerohydrolase (RPE65), found in Cynops pyrrhogaster (Japanese fire-bellied newt).